We begin with the raw amino-acid sequence, 361 residues long: 5-formaminoimidazole-4-carboxamide-1-(beta)-D-ribofuranosyl 5'-monophosphate synthetase (361 aa).

Residues H27 and S94 each contribute to the 5-amino-1-(5-phospho-beta-D-ribosyl)imidazole-4-carboxamide site. The ATP-grasp domain maps to 116–348 (RAILRWEAER…MGQRIAKEIK (233 aa)). ATP-binding positions include 146–208 (PDEI…ANYC) and E230. N258 is a binding site for 5-amino-1-(5-phospho-beta-D-ribosyl)imidazole-4-carboxamide. Q297 and E310 together coordinate Mg(2+).

This sequence belongs to the phosphohexose mutase family. The cofactor is Mg(2+). Mn(2+) serves as cofactor.

It carries out the reaction 5-amino-1-(5-phospho-beta-D-ribosyl)imidazole-4-carboxamide + formate + ATP = 5-formamido-1-(5-phospho-D-ribosyl)imidazole-4-carboxamide + ADP + phosphate. The protein operates within purine metabolism; IMP biosynthesis via de novo pathway; 5-formamido-1-(5-phospho-D-ribosyl)imidazole-4-carboxamide from 5-amino-1-(5-phospho-D-ribosyl)imidazole-4-carboxamide (formate route): step 1/1. Catalyzes the ATP- and formate-dependent formylation of 5-aminoimidazole-4-carboxamide-1-beta-d-ribofuranosyl 5'-monophosphate (AICAR) to 5-formaminoimidazole-4-carboxamide-1-beta-d-ribofuranosyl 5'-monophosphate (FAICAR) in the absence of folates. This Methanococcus maripaludis (strain DSM 14266 / JCM 13030 / NBRC 101832 / S2 / LL) protein is 5-formaminoimidazole-4-carboxamide-1-(beta)-D-ribofuranosyl 5'-monophosphate synthetase.